The following is a 44-amino-acid chain: Photosystem I reaction center subunit IX (44 aa).

The chain crosses the membrane as a helical span at residues 7 to 27 (YLSVAPVISTLWFGSLAGLLI).

Belongs to the PsaJ family.

The protein localises to the plastid. It localises to the chloroplast thylakoid membrane. Functionally, may help in the organization of the PsaE and PsaF subunits. This is Photosystem I reaction center subunit IX from Ceratophyllum demersum (Rigid hornwort).